A 64-amino-acid polypeptide reads, in one-letter code: Conotoxin mr5.1a (64 aa).

Residues 1–19 (MRCVPVFVILLLLIASAPS) form the signal peptide. A propeptide spanning residues 20-48 (VDARLKTKDDMPLPSSHANIKRTLQIHRN) is cleaved from the precursor. Position 60 is a 4-carboxyglutamate (Glu-60).

This sequence belongs to the conotoxin T superfamily. Contains 2 disulfide bonds that can be either 'C1-C3, C2-C4' or 'C1-C4, C2-C3', since these disulfide connectivities have been observed for conotoxins with cysteine framework V (for examples, see AC P0DQQ7 and AC P81755). As to expression, expressed by the venom duct.

It localises to the secreted. This is Conotoxin mr5.1a from Conus marmoreus (Marble cone).